A 348-amino-acid polypeptide reads, in one-letter code: Oxygen-dependent coproporphyrinogen-III oxidase (348 aa).

Serine 104 is a substrate binding site. A divalent metal cation is bound by residues histidine 108 and histidine 118. The Proton donor role is filled by histidine 118. 120–122 (NYR) is a substrate binding site. A divalent metal cation-binding residues include histidine 152 and histidine 182. Residues 272-307 (YAEFNLVWDRGTIFGLQTNGRTESILMSLPPLARWE) are important for dimerization.

The protein belongs to the aerobic coproporphyrinogen-III oxidase family. Homodimer. It depends on a divalent metal cation as a cofactor.

The protein localises to the cytoplasm. The enzyme catalyses coproporphyrinogen III + O2 + 2 H(+) = protoporphyrinogen IX + 2 CO2 + 2 H2O. The protein operates within porphyrin-containing compound metabolism; protoporphyrin-IX biosynthesis; protoporphyrinogen-IX from coproporphyrinogen-III (O2 route): step 1/1. In terms of biological role, involved in the heme and chlorophyll biosynthesis. Catalyzes the aerobic oxidative decarboxylation of propionate groups of rings A and B of coproporphyrinogen-III to yield the vinyl groups in protoporphyrinogen-IX. This chain is Oxygen-dependent coproporphyrinogen-III oxidase, found in Prochlorococcus marinus (strain NATL2A).